The chain runs to 230 residues: 2,3-bisphosphoglycerate-dependent phosphoglycerate mutase (230 aa).

Substrate-binding positions include 8–15, 21–22, R60, 87–90, K98, 114–115, and 183–184; these read RHGESEWN, TG, ERHY, RR, and GN. H9 acts as the Tele-phosphohistidine intermediate in catalysis. E87 (proton donor/acceptor) is an active-site residue.

It belongs to the phosphoglycerate mutase family. BPG-dependent PGAM subfamily.

It carries out the reaction (2R)-2-phosphoglycerate = (2R)-3-phosphoglycerate. The protein operates within carbohydrate degradation; glycolysis; pyruvate from D-glyceraldehyde 3-phosphate: step 3/5. In terms of biological role, catalyzes the interconversion of 2-phosphoglycerate and 3-phosphoglycerate. This Streptococcus sanguinis (strain SK36) protein is 2,3-bisphosphoglycerate-dependent phosphoglycerate mutase.